The following is a 280-amino-acid chain: Adenosylcobinamide-GDP ribazoletransferase (280 aa).

Helical transmembrane passes span 4–24 (YLLA…GITM), 34–54 (IFFY…VAYA), 58–78 (VFPG…ITGF), 108–128 (TLGT…YGSI), 136–156 (IAAF…IAEV), 197–217 (LIGF…IGLI), and 254–274 (ITAL…YLGG).

Belongs to the CobS family. Mg(2+) serves as cofactor.

The protein localises to the cell membrane. The catalysed reaction is alpha-ribazole + adenosylcob(III)inamide-GDP = adenosylcob(III)alamin + GMP + H(+). It catalyses the reaction alpha-ribazole 5'-phosphate + adenosylcob(III)inamide-GDP = adenosylcob(III)alamin 5'-phosphate + GMP + H(+). The protein operates within cofactor biosynthesis; adenosylcobalamin biosynthesis; adenosylcobalamin from cob(II)yrinate a,c-diamide: step 7/7. Functionally, joins adenosylcobinamide-GDP and alpha-ribazole to generate adenosylcobalamin (Ado-cobalamin). Also synthesizes adenosylcobalamin 5'-phosphate from adenosylcobinamide-GDP and alpha-ribazole 5'-phosphate. The polypeptide is Adenosylcobinamide-GDP ribazoletransferase (Methanosarcina mazei (strain ATCC BAA-159 / DSM 3647 / Goe1 / Go1 / JCM 11833 / OCM 88) (Methanosarcina frisia)).